A 189-amino-acid chain; its full sequence is Glucose-6-phosphate isomerase (189 aa).

4 residues coordinate Fe cation: histidine 88, histidine 90, glutamate 97, and histidine 136.

This sequence belongs to the archaeal-type GPI family. In terms of assembly, homodimer.

It is found in the cytoplasm. It catalyses the reaction alpha-D-glucose 6-phosphate = beta-D-fructose 6-phosphate. The protein operates within carbohydrate degradation; glycolysis; D-glyceraldehyde 3-phosphate and glycerone phosphate from D-glucose: step 2/4. The protein is Glucose-6-phosphate isomerase of Thermococcus kodakarensis (strain ATCC BAA-918 / JCM 12380 / KOD1) (Pyrococcus kodakaraensis (strain KOD1)).